Consider the following 1040-residue polypeptide: Multidrug resistance protein MdtB (1040 aa).

11 helical membrane-spanning segments follow: residues 15 to 37 (LFILRPVATTLLMAAILLAGIIG), 345 to 362 (FELMLAIALVVMIIYLFL), 367 to 389 (ATIIPGVAVPLSLIGTFAVMVFL), 396 to 418 (LTLMALTIATGFVVDDAIVVIEN), 438 to 460 (GEIGFTIISLTFSLIAVLIPLLF), 472 to 494 (FAVTLAVAILISAVVSLTLTPMM), 535 to 557 (HPWLTLSVAFATLLLSVMLWITI), 867 to 889 (VWLIVAAVVAMYIVLGVLYESFI), 909 to 931 (LIIAGSELDIIAIIGIILLIGIV), 968 to 990 (ILMTTLAALLGALPLMLSTGVGA), and 1000 to 1022 (MVGGLLVSQVLTLFTTPVIYLLF).

It belongs to the resistance-nodulation-cell division (RND) (TC 2.A.6) family. MdtB subfamily. In terms of assembly, part of a tripartite efflux system composed of MdtA, MdtB and MdtC. MdtB forms a heteromultimer with MdtC.

The protein localises to the cell inner membrane. The protein is Multidrug resistance protein MdtB of Salmonella typhi.